The chain runs to 401 residues: Alpha-(1,4)-fucosyltransferase (401 aa).

Topologically, residues 1–4 are cytoplasmic; that stretch reads MPMR. The chain crosses the membrane as a helical; Signal-anchor for type II membrane protein span at residues 5–27; sequence YLNAMAALLMMFFTLLILSFTGI. Residues 28–401 are Lumenal-facing; that stretch reads LEFPSASTSM…SRRGGKNAGV (374 aa). N85 is a glycosylation site (N-linked (GlcNAc...) asparagine).

Belongs to the glycosyltransferase 10 family. As to expression, present in root, stem, flower buds and green siliques.

The protein resides in the golgi apparatus. Its subcellular location is the golgi stack membrane. It participates in protein modification; protein glycosylation. May be involved in cell wall synthesis. Catalyzes alpha-1,4 glycosidic linkages and generates Lewis-a epitopes. The sequence is that of Alpha-(1,4)-fucosyltransferase (FUT13) from Arabidopsis thaliana (Mouse-ear cress).